The sequence spans 345 residues: cAMP-responsive element modulator (345 aa).

The 60-residue stretch at 88 to 147 (VQVAAIAETDESAESEGVIDSHKRREILSRRPSYRKILNELSSDVPGVPKIEEERSEEEG) folds into the KID domain. A phosphoserine mark is found at serine 102, serine 129, serine 271, serine 274, and serine 277. The bZIP domain maps to 286-345 (TRKRELRLMKNREAAKECRRRKKEYVKCLESRVAVLEVQNKKLIEELETLKDICSPKTDY). A basic motif region spans residues 287–312 (RKRELRLMKNREAAKECRRRKKEYVK). The interval 314–335 (LESRVAVLEVQNKKLIEELETL) is leucine-zipper.

The protein belongs to the bZIP family. As to quaternary structure, binds DNA as a dimer. Interacts with FHL5. Interacts with CDC34. May interact with TSSK4. Post-translationally, isoform 9 is ubiquitinated by CDC34 and RAD6B in order to be degraded by the proteasome. In terms of processing, stimulated by phosphorylation. Phosphorylated on Ser-116 by TSSK4 in vitro. As to expression, expressed in testes (round spermatids) (at protein level). Isoform 14 is the major activator form in testes.

It localises to the nucleus. The protein resides in the cytoplasm. Its function is as follows. Transcriptional regulator that binds the cAMP response element (CRE), a sequence present in many viral and cellular promoters. Isoforms are either transcriptional activators or repressors. Plays a role in spermatogenesis and is involved in spermatid maturation. Functionally, may play a role in the regulation of the circadian clock: acts as a transcriptional repressor of the core circadian component PER1 by directly binding to cAMP response elements in its promoter. The protein is cAMP-responsive element modulator of Homo sapiens (Human).